Reading from the N-terminus, the 261-residue chain is Cytochrome c oxidase subunit 3 (261 aa).

The Mitochondrial matrix segment spans residues 1–15 (MAHQAHAYHMVDPSP). A helical transmembrane segment spans residues 16-34 (WPLTGAIAALLMTSGLAIW). At 35–40 (FHFHST) the chain is on the mitochondrial intermembrane side. The helical transmembrane segment at 41–66 (TLMTLGLILLLLTMYQWWRDIIREGT) threads the bilayer. Over 67 to 72 (FQGHHT) the chain is Mitochondrial matrix. The chain crosses the membrane as a helical span at residues 73–105 (PPVQKGLRYGMILFITSEVFFFLGFFWAFYHSS). At 106-128 (LAPTPELGGCWPPTGITPLDPFE) the chain is on the mitochondrial intermembrane side. The helical transmembrane segment at 129–152 (VPLLNTAVLLASGVTVTWAHHSIM) threads the bilayer. Topologically, residues 153–155 (EGE) are mitochondrial matrix. The chain crosses the membrane as a helical span at residues 156 to 183 (RKQAIQSLALTILLGFYFTALQAMEYYE). The Mitochondrial intermembrane segment spans residues 184–190 (APFTIAD). A helical transmembrane segment spans residues 191–223 (GVYGSTFFVATGFHGLHVIIGSTFLAVCLLRQI). Residues 224–232 (QYHFTSEHH) are Mitochondrial matrix-facing. The chain crosses the membrane as a helical span at residues 233–256 (FGFEAAAWYWHFVDVVWLFLYVSI). Residues 257–261 (YWWGS) lie on the Mitochondrial intermembrane side of the membrane.

The protein belongs to the cytochrome c oxidase subunit 3 family. In terms of assembly, component of the cytochrome c oxidase (complex IV, CIV), a multisubunit enzyme composed of 14 subunits. The complex is composed of a catalytic core of 3 subunits MT-CO1, MT-CO2 and MT-CO3, encoded in the mitochondrial DNA, and 11 supernumerary subunits COX4I, COX5A, COX5B, COX6A, COX6B, COX6C, COX7A, COX7B, COX7C, COX8 and NDUFA4, which are encoded in the nuclear genome. The complex exists as a monomer or a dimer and forms supercomplexes (SCs) in the inner mitochondrial membrane with NADH-ubiquinone oxidoreductase (complex I, CI) and ubiquinol-cytochrome c oxidoreductase (cytochrome b-c1 complex, complex III, CIII), resulting in different assemblies (supercomplex SCI(1)III(2)IV(1) and megacomplex MCI(2)III(2)IV(2)).

The protein resides in the mitochondrion inner membrane. The enzyme catalyses 4 Fe(II)-[cytochrome c] + O2 + 8 H(+)(in) = 4 Fe(III)-[cytochrome c] + 2 H2O + 4 H(+)(out). In terms of biological role, component of the cytochrome c oxidase, the last enzyme in the mitochondrial electron transport chain which drives oxidative phosphorylation. The respiratory chain contains 3 multisubunit complexes succinate dehydrogenase (complex II, CII), ubiquinol-cytochrome c oxidoreductase (cytochrome b-c1 complex, complex III, CIII) and cytochrome c oxidase (complex IV, CIV), that cooperate to transfer electrons derived from NADH and succinate to molecular oxygen, creating an electrochemical gradient over the inner membrane that drives transmembrane transport and the ATP synthase. Cytochrome c oxidase is the component of the respiratory chain that catalyzes the reduction of oxygen to water. Electrons originating from reduced cytochrome c in the intermembrane space (IMS) are transferred via the dinuclear copper A center (CU(A)) of subunit 2 and heme A of subunit 1 to the active site in subunit 1, a binuclear center (BNC) formed by heme A3 and copper B (CU(B)). The BNC reduces molecular oxygen to 2 water molecules using 4 electrons from cytochrome c in the IMS and 4 protons from the mitochondrial matrix. This Carassius auratus (Goldfish) protein is Cytochrome c oxidase subunit 3 (mt-co3).